A 173-amino-acid polypeptide reads, in one-letter code: uncharacterized protein (173 aa).

The MSP domain occupies 16-133 (DLVLRPETIT…KHVLIRFPNK (118 aa)). Residues 141 to 163 (KKMEEDDMKQQKERNKLSNEKMG) are compositionally biased toward basic and acidic residues. Positions 141–173 (KKMEEDDMKQQKERNKLSNEKMGIRNQNMGEKK) are disordered.

This is an uncharacterized protein from Caenorhabditis elegans.